The primary structure comprises 1073 residues: Carbamoyl phosphate synthase large chain (1073 aa).

Residues proline 2 to glutamate 403 form a carboxyphosphate synthetic domain region. 12 residues coordinate ATP: arginine 129, arginine 169, glycine 175, glycine 176, glutamate 208, leucine 210, glutamate 215, glycine 241, isoleucine 242, histidine 243, glutamine 285, and glutamate 299. The ATP-grasp 1 domain occupies aspartate 133–valine 328. Mg(2+) contacts are provided by glutamine 285, glutamate 299, and asparagine 301. Positions 285, 299, and 301 each coordinate Mn(2+). The segment at valine 404–alanine 553 is oligomerization domain. The carbamoyl phosphate synthetic domain stretch occupies residues asparagine 554 to asparagine 936. One can recognise an ATP-grasp 2 domain in the interval glutamine 679 to alanine 870. Residues arginine 715, histidine 754, leucine 756, glutamate 761, glycine 786, valine 787, histidine 788, serine 789, glutamine 829, and glutamate 841 each contribute to the ATP site. The Mg(2+) site is built by glutamine 829, glutamate 841, and asparagine 843. Positions 829, 841, and 843 each coordinate Mn(2+). Positions serine 937–lysine 1073 constitute an MGS-like domain. The tract at residues serine 937 to lysine 1073 is allosteric domain.

This sequence belongs to the CarB family. In terms of assembly, composed of two chains; the small (or glutamine) chain promotes the hydrolysis of glutamine to ammonia, which is used by the large (or ammonia) chain to synthesize carbamoyl phosphate. Tetramer of heterodimers (alpha,beta)4. It depends on Mg(2+) as a cofactor. Mn(2+) serves as cofactor.

The enzyme catalyses hydrogencarbonate + L-glutamine + 2 ATP + H2O = carbamoyl phosphate + L-glutamate + 2 ADP + phosphate + 2 H(+). The catalysed reaction is hydrogencarbonate + NH4(+) + 2 ATP = carbamoyl phosphate + 2 ADP + phosphate + 2 H(+). Its pathway is amino-acid biosynthesis; L-arginine biosynthesis; carbamoyl phosphate from bicarbonate: step 1/1. It participates in pyrimidine metabolism; UMP biosynthesis via de novo pathway; (S)-dihydroorotate from bicarbonate: step 1/3. In terms of biological role, large subunit of the glutamine-dependent carbamoyl phosphate synthetase (CPSase). CPSase catalyzes the formation of carbamoyl phosphate from the ammonia moiety of glutamine, carbonate, and phosphate donated by ATP, constituting the first step of 2 biosynthetic pathways, one leading to arginine and/or urea and the other to pyrimidine nucleotides. The large subunit (synthetase) binds the substrates ammonia (free or transferred from glutamine from the small subunit), hydrogencarbonate and ATP and carries out an ATP-coupled ligase reaction, activating hydrogencarbonate by forming carboxy phosphate which reacts with ammonia to form carbamoyl phosphate. The sequence is that of Carbamoyl phosphate synthase large chain from Escherichia coli O157:H7.